A 1165-amino-acid chain; its full sequence is Disease resistance protein RPS4B (1165 aa).

The TIR domain maps to 12-174; it reads PQHQVFINFR…EIVKEVKKVL (163 aa). The active site involves Glu-86. An NB-ARC domain is found at 211–474; it reads KQRLKELEEK…FLDIACFRSQ (264 aa). The LRR 1 repeat unit spans residues 592–613; that stretch reads SHCPHECLTNNKINMPDGLELP. The stretch at 614 to 635 is one LRR 2; degenerate repeat; sequence LKEVRCLHWLKFPLEELPNDFD. 6 LRR repeats span residues 636 to 659, 684 to 703, 704 to 725, 726 to 748, 772 to 794, and 795 to 818; these read PINL…VKDT, NLQR…RDVN, LTSL…PLIP, ENLK…VGNL, LKTL…EINK, and SSLK…SVQY. The LRR 9; degenerate repeat unit spans residues 819–836; sequence LCLSRNDHLIYLPAGINQ. The LRR 10 repeat unit spans residues 837–863; sequence VSQLTRLDLKYCTKLTYVPELPPTLQY.

It belongs to the disease resistance TIR-NB-LRR family. Interacts with RRS1B. RPS4B-RRS1B heterodimer interacts with the bacterial effectors AvrRps4 and PopP2.

Its subcellular location is the nucleus. It carries out the reaction NAD(+) + H2O = ADP-D-ribose + nicotinamide + H(+). Its function is as follows. Disease resistance (R) protein that specifically recognizes the AvrRps4 type III effector avirulence protein from P.syringae. Heterodimerization with RRS1B is required to form a functional complex to recognize AvrRps4 and to mediate the hypersensitive response. This chain is Disease resistance protein RPS4B, found in Arabidopsis thaliana (Mouse-ear cress).